A 593-amino-acid chain; its full sequence is Solute carrier family 40 member 3, chloroplastic (593 aa).

The interval 1 to 23 (MSMSKLLSPPPTSPPGPALSRLP) is disordered. A chloroplast-targeting transit peptide spans 1 to 51 (MSMSKLLSPPPTSPPGPALSRLPCRRVAPPPVLPFPFPLRRLTSRRVFATS). The segment covering 8-17 (SPPPTSPPGP) has biased composition (pro residues). Transmembrane regions (helical) follow at residues 181–201 (ILPV…AGPL), 219–239 (AAIQ…AFAV), 253–273 (FAVL…LGII), 303–322 (LLCE…KNNP), 323–343 (LTCI…LIFL), 403–423 (YVFV…TFLI), 431–451 (VIGA…FATA), 462–482 (AGAA…VVYL), 493–513 (LFAF…YSAI), 530–550 (IGAT…AVAV), and 557–577 (HFGA…GMYC).

Belongs to the ferroportin (FP) (TC 2.A.100) family. SLC40A subfamily.

Its subcellular location is the membrane. It localises to the plastid. The protein resides in the chloroplast envelope. Its function is as follows. May be involved in iron transport and iron homeostasis. The protein is Solute carrier family 40 member 3, chloroplastic of Oryza sativa subsp. japonica (Rice).